A 402-amino-acid chain; its full sequence is tRNA(Met) cytidine acetate ligase (402 aa).

ATP is bound by residues 7–20, Gly-102, Asn-171, and Arg-196; that span reads ITEY…HELH.

It belongs to the TmcAL family.

The protein resides in the cytoplasm. It catalyses the reaction cytidine(34) in elongator tRNA(Met) + acetate + ATP = N(4)-acetylcytidine(34) in elongator tRNA(Met) + AMP + diphosphate. Functionally, catalyzes the formation of N(4)-acetylcytidine (ac(4)C) at the wobble position of elongator tRNA(Met), using acetate and ATP as substrates. First activates an acetate ion to form acetyladenylate (Ac-AMP) and then transfers the acetyl group to tRNA to form ac(4)C34. The sequence is that of tRNA(Met) cytidine acetate ligase from Clostridium perfringens (strain ATCC 13124 / DSM 756 / JCM 1290 / NCIMB 6125 / NCTC 8237 / Type A).